Consider the following 27-residue polypeptide: GFGMLFKFLAKKVAKKLVSHVAQKQLE.

Glutamic acid 1-amide is present on Glu27.

Expressed by the venom gland.

The protein localises to the secreted. The chain is Cupiennin-4a from Cupiennius salei (American wandering spider).